The sequence spans 205 residues: Methylamine utilization protein MauD (205 aa).

A helical membrane pass occupies residues 5–25; the sequence is FLIASNVLLWLALIGCAVLML. The Thioredoxin domain occupies 50 to 184; it reads PDVGDAAPTF…LESLLEADKS (135 aa).

The protein resides in the membrane. It functions in the pathway one-carbon metabolism; methylamine degradation. May be specifically involved in the processing, transport, and/or maturation of the MADH beta-subunit. In Methylorubrum extorquens (strain ATCC 14718 / DSM 1338 / JCM 2805 / NCIMB 9133 / AM1) (Methylobacterium extorquens), this protein is Methylamine utilization protein MauD (mauD).